The primary structure comprises 306 residues: MGERSAPTRRVDPLGGLLVVDKDGGMTSHDVVARCRKILGTRKIGHAGTLDPMATGVLVLGVERATKLLGLLTLTTKAYTATIRLGSATTTDDAEGEVLTTVPAGHLGDAEVAAGVAALTGDIQQVPATVSAIKIGGERAYARHRAGEQVELAARPVTVSRFEVLARRDVAGFVDLDVVVECSSGTYVRALARDLGAALGVGGHLTALRRTRVGPFTLDHARTLDALADEPRLNLDMDEAVRIAFPHRAIDAREAESLRDGRWLDPVGIPGVYAALTADGTAIALLEEKGKRASPVFVVRPRGLVD.

Residue Asp-51 is the Nucleophile of the active site.

This sequence belongs to the pseudouridine synthase TruB family. Type 1 subfamily.

It catalyses the reaction uridine(55) in tRNA = pseudouridine(55) in tRNA. Responsible for synthesis of pseudouridine from uracil-55 in the psi GC loop of transfer RNAs. The protein is tRNA pseudouridine synthase B of Nocardia farcinica (strain IFM 10152).